The primary structure comprises 1029 residues: mRNA 3'-end-processing protein rna14 (1029 aa).

Disordered regions lie at residues 1–177 and 225–251; these read MAEE…PDVS and GNVQ…PHDR. Positions 21 to 32 are enriched in basic and acidic residues; the sequence is VDYKAVEEHGAD. 2 stretches are compositionally biased toward polar residues: residues 43–79 and 104–119; these read KTLQ…NSVQ and TSTM…QPKT. The segment covering 127–140 has biased composition (acidic residues); the sequence is VEDEDEDDAGDADY. Residues 153–175 show a composition bias toward polar residues; the sequence is TVATNVPQQSVSGNENEASSTPD. Residues 229 to 243 show a composition bias toward low complexity; sequence DSATATPTPDSPSTS. 6 HAT repeats span residues 281–313, 315–346, 357–392, 406–439, 469–509, and 521–553; these read NRFD…MESE, NDLY…YVRR, QARR…FIKS, QKMD…FEMG, ITRD…WEKG, and AFKG…FCFL. Disordered regions lie at residues 634–664, 853–951, and 996–1023; these read TFAK…ESVK, TAVR…GSPA, and IPLP…SPSL. Residues 894–908 are compositionally biased toward basic and acidic residues; it reads SPKRPLEDFDDDYNR. 2 stretches are compositionally biased toward polar residues: residues 932-949 and 1006-1023; these read RSQL…SQGS and GTTQ…SPSL.

The protein resides in the nucleus. Its subcellular location is the cytoplasm. Functionally, component of the cleavage factor IA (CFIA) complex, which is involved in the endonucleolytic cleavage during polyadenylation-dependent pre-mRNA 3'-end formation. This is mRNA 3'-end-processing protein rna14 (rna14) from Aspergillus fumigatus (strain ATCC MYA-4609 / CBS 101355 / FGSC A1100 / Af293) (Neosartorya fumigata).